A 365-amino-acid polypeptide reads, in one-letter code: Endophilin-B1 (365 aa).

The residue at position 1 (Met-1) is an N-acetylmethionine. The segment at 1–30 is membrane-binding amphipathic helix; it reads MNIMDFNVKKLAADAGTFLSRAVQFTEEKL. The segment at 1–37 is required for membrane binding; it reads MNIMDFNVKKLAADAGTFLSRAVQFTEEKLGQAEKTE. The region spanning 27-261 is the BAR domain; sequence EEKLGQAEKT…LGSFPSNYLS (235 aa). Thr-145 carries the post-translational modification Phosphothreonine; by CDK5. A coiled-coil region spans residues 155 to 195; the sequence is YKTIAKERKLLQNKRLDLDAAKTRLKKAKAAETRNSSEQEL. Residues 305–365 form the SH3 domain; that stretch reads SGSRKARVLY…VPITYLELLN (61 aa).

This sequence belongs to the endophilin family. In terms of assembly, homodimer, and heterodimer with SH3GLB2. Binds BAX; induction of apoptosis augments BAX binding. Binds DNM1, HTT, AMPH, BIN1 and ARFGAP1. Interacts with UVRAG; UVRAG bridges the interaction to BECN1 indicative for an association with the PI3K complex II (PI3KC3-C2). In terms of processing, phosphorylated at Thr-145 by CDK5; this phosphorylation is required for autophagy induction in starved neurons and facilitates homodimerization. As to expression, highly expressed in heart, skeletal muscle, kidney and placenta. Detected at lower levels in brain, colon, thymus, spleen, liver, small intestine, lung and peripheral blood leukocytes.

The protein localises to the cytoplasm. The protein resides in the golgi apparatus membrane. It localises to the mitochondrion outer membrane. It is found in the cytoplasmic vesicle. Its subcellular location is the autophagosome membrane. The protein localises to the midbody. Functionally, may be required for normal outer mitochondrial membrane dynamics. Required for coatomer-mediated retrograde transport in certain cells. May recruit other proteins to membranes with high curvature. May promote membrane fusion. Involved in activation of caspase-dependent apoptosis by promoting BAX/BAK1 activation. Isoform 1 acts proapoptotic in fibroblasts. Involved in caspase-independent apoptosis during nutrition starvation and involved in the regulation of autophagy. Activates lipid kinase activity of PIK3C3 during autophagy probably by associating with the PI3K complex II (PI3KC3-C2). Associated with PI3KC3-C2 during autophagy may regulate the trafficking of ATG9A from the Golgi complex to the peripheral cytoplasm for the formation of autophagosomes by inducing Golgi membrane tubulation and fragmentation. Involved in regulation of degradative endocytic trafficking and cytokinesis, probably in the context of PI3KC3-C2. Isoform 2 acts antiapoptotic in neuronal cells; involved in maintenance of mitochondrial morphology and promotes neuronal viability. This chain is Endophilin-B1 (SH3GLB1), found in Homo sapiens (Human).